The sequence spans 513 residues: MDMLNLTLKPGCLSLNQLRQVSRSPINLSLDASAIPAIEDSTQVVERVIAEDRTVYGINTGFGLLANTRIAPEDLETLQRSIVLSHAAGIGEFMADETVRLMMVLKINSLSRGYSGIRLNVIQMLIDLVNAQVYPCVPQKGSVGASGDLAPLAHMSTVLLGEGQARHNGKIISGLEALKIAGLEPITLAPKEGLALLNGTQASTAFALEGLFIAEDLFASATVCGAMSVEAALGSRRPFDPRIHRVRGHRSQMDSAMAYRHLLDTSSEIGQSHSNCEKVQDPYSLRCQPQVMGACLQQIRNSAEILLVESNSVSDNPLVFAEDDDIISGGNFHAEPVAMAADNLALAIAEIGSLSERRMALLIDSALSKLPPFLVDNGGVNSGFMIAQVTSAALASENKTLAHPASVDSLPTSANQEDHVSMATFAARRLREMGENTRGILAVEYLSAAQGLDFRAPHKSSPRIEQAKQMLREKVSFYDKDRYFAPDIEKANSLLKLAVHNVLMPEALLPSVL.

The segment at residues 145–147 (ASG) is a cross-link (5-imidazolinone (Ala-Gly)). Residue Ser-146 is modified to 2,3-didehydroalanine (Ser).

This sequence belongs to the PAL/histidase family. Contains an active site 4-methylidene-imidazol-5-one (MIO), which is formed autocatalytically by cyclization and dehydration of residues Ala-Ser-Gly.

It is found in the cytoplasm. It catalyses the reaction L-histidine = trans-urocanate + NH4(+). The protein operates within amino-acid degradation; L-histidine degradation into L-glutamate; N-formimidoyl-L-glutamate from L-histidine: step 1/3. This chain is Histidine ammonia-lyase, found in Vibrio vulnificus (strain YJ016).